A 316-amino-acid polypeptide reads, in one-letter code: DNA-directed RNA polymerase subunit alpha (316 aa).

An alpha N-terminal domain (alpha-NTD) region spans residues 1–229 (MLEMEKPRID…EYLKLFTEID (229 aa)). The segment at 246–316 (KDKILEMSIE…LNLSFRKSED (71 aa)) is alpha C-terminal domain (alpha-CTD).

The protein belongs to the RNA polymerase alpha chain family. Homodimer. The RNAP catalytic core consists of 2 alpha, 1 beta, 1 beta' and 1 omega subunit. When a sigma factor is associated with the core the holoenzyme is formed, which can initiate transcription.

It carries out the reaction RNA(n) + a ribonucleoside 5'-triphosphate = RNA(n+1) + diphosphate. Its function is as follows. DNA-dependent RNA polymerase catalyzes the transcription of DNA into RNA using the four ribonucleoside triphosphates as substrates. This chain is DNA-directed RNA polymerase subunit alpha, found in Syntrophomonas wolfei subsp. wolfei (strain DSM 2245B / Goettingen).